The sequence spans 576 residues: CTP synthase (576 aa).

A Glutamine amidotransferase type-1 domain is found at 305-559; sequence QIALVGKYTH…LGLVAAAANI (255 aa). Residues Cys404, His535, and Glu537 each act as for GATase activity in the active site.

Belongs to the CTP synthase family.

It catalyses the reaction UTP + L-glutamine + ATP + H2O = CTP + L-glutamate + ADP + phosphate + 2 H(+). The protein operates within pyrimidine metabolism; CTP biosynthesis via de novo pathway; CTP from UDP: step 2/2. Its function is as follows. Catalyzes the ATP-dependent amination of UTP to CTP with either L-glutamine or ammonia as the source of nitrogen. The polypeptide is CTP synthase (URA7) (Eremothecium gossypii (strain ATCC 10895 / CBS 109.51 / FGSC 9923 / NRRL Y-1056) (Yeast)).